The sequence spans 447 residues: Serine/threonine-protein phosphatase 2A 55 kDa regulatory subunit B gamma isoform (447 aa).

WD repeat units lie at residues 22–61, 87–128, 171–209, 220–260, 279–317, 334–375, and 410–446; these read TEAD…KNAP, EIEE…KRPE, GHTY…RSFN, DLTE…LCDK, EIIS…RPIE, ESDC…DVTL, and DFTK…NSDM.

The protein belongs to the phosphatase 2A regulatory subunit B family. PP2A consists of a common heterodimeric core enzyme, composed of a 36 kDa catalytic subunit (subunit C) and a 65 kDa constant regulatory subunit (PR65 or subunit A), that associates with a variety of regulatory subunits. Proteins that associate with the core dimer include three families of regulatory subunits B (the R2/B/PR55/B55, R3/B''/PR72/PR130/PR59 and R5/B'/B56 families), the 48 kDa variable regulatory subunit, viral proteins, and cell signaling molecules. Interacts with IER5.

Its function is as follows. The B regulatory subunit might modulate substrate selectivity and catalytic activity, and might also direct the localization of the catalytic enzyme to a particular subcellular compartment. The polypeptide is Serine/threonine-protein phosphatase 2A 55 kDa regulatory subunit B gamma isoform (Ppp2r2c) (Mus musculus (Mouse)).